Consider the following 607-residue polypeptide: Pyruvate decarboxylase 1 (607 aa).

Substrate contacts are provided by Asp69 and His156. A thiamine pyrophosphate binding region spans residues 434-516 (DSWFNCQKLK…FLINNGGYTI (83 aa)). Residues Asp484, Asn511, and Gly513 each contribute to the Mg(2+) site. Glu517 contacts substrate.

This sequence belongs to the TPP enzyme family. As to quaternary structure, homotetramer. The cofactor is a metal cation. Requires thiamine diphosphate as cofactor. As to expression, highly expressed in seeds, and at lower levels in roots and siliques.

It catalyses the reaction a 2-oxocarboxylate + H(+) = an aldehyde + CO2. Its function is as follows. May play a role in ethanolic fermentation during anoxia. The sequence is that of Pyruvate decarboxylase 1 (PDC1) from Arabidopsis thaliana (Mouse-ear cress).